A 492-amino-acid polypeptide reads, in one-letter code: Serine carboxypeptidase-like 31 (492 aa).

Residues 1 to 30 form the signal peptide; the sequence is MDNYQTKNISNLLTSLCFTTLLILAPVVIC. Disulfide bonds link cysteine 105–cysteine 376, cysteine 270–cysteine 283, and cysteine 307–cysteine 344. A glycan (N-linked (GlcNAc...) asparagine) is linked at asparagine 156. The active site involves serine 198. Asparagine 221 and asparagine 271 each carry an N-linked (GlcNAc...) asparagine glycan. N-linked (GlcNAc...) asparagine glycosylation is found at asparagine 372 and asparagine 383. Catalysis depends on residues aspartate 413 and histidine 465.

The protein belongs to the peptidase S10 family. In terms of tissue distribution, expressed in roots, senescent leaves, stems, flowers and siliques.

Its subcellular location is the secreted. Probable carboxypeptidase. This is Serine carboxypeptidase-like 31 (SCPL31) from Arabidopsis thaliana (Mouse-ear cress).